Consider the following 320-residue polypeptide: Histidine decarboxylase proenzyme (320 aa).

Residues 2–11 (NKNLEANRNR) constitute a propeptide that is removed on maturation. Ser98 carries the post-translational modification Pyruvic acid (Ser). Catalysis depends on Glu215, which acts as the Proton donor.

In terms of assembly, the proenzyme is a hexamer of identical pi chains; each pi chain monomer is cleaved to form a small (or beta) chain and a large (or alpha) chain by non-hydrolytic self-catalysis. The cofactor is pyruvate.

The enzyme catalyses L-histidine + H(+) = histamine + CO2. This chain is Histidine decarboxylase proenzyme (hdc), found in Clostridium perfringens (strain 13 / Type A).